The primary structure comprises 585 residues: Putative ABC transporter ATP-binding protein MG187 (585 aa).

One can recognise an ABC transporter domain in the interval 8–468 (IELKNIVVDF…PANEFVARFL (461 aa)). Residue 40 to 47 (GPSGCGKT) coordinates ATP.

This sequence belongs to the ABC transporter superfamily.

This is Putative ABC transporter ATP-binding protein MG187 from Mycoplasma genitalium (strain ATCC 33530 / DSM 19775 / NCTC 10195 / G37) (Mycoplasmoides genitalium).